A 169-amino-acid chain; its full sequence is uncharacterized protein (169 aa).

A helical membrane pass occupies residues 55–77 (SLFIFKAVMILHTCLIVKSIRIF).

It localises to the membrane. This is an uncharacterized protein from Saccharomyces cerevisiae (strain ATCC 204508 / S288c) (Baker's yeast).